Consider the following 851-residue polypeptide: DNA mismatch repair protein MutS (851 aa).

614 to 621 (GPNMGGKS) serves as a coordination point for ATP.

It belongs to the DNA mismatch repair MutS family.

Its function is as follows. This protein is involved in the repair of mismatches in DNA. It is possible that it carries out the mismatch recognition step. This protein has a weak ATPase activity. The protein is DNA mismatch repair protein MutS of Yersinia enterocolitica serotype O:8 / biotype 1B (strain NCTC 13174 / 8081).